The chain runs to 1066 residues: Phosphatidylinositol 4-kinase PIK1 (1066 aa).

In terms of domain architecture, PIK helical spans 1–133; sequence MHKASSSKKS…GFQVARRVLN (133 aa). Residues Ser-10 and Ser-236 each carry the phosphoserine modification. 3 disordered regions span residues 218-240, 303-411, and 564-624; these read KKTS…PIDL, DGKN…KKAN, and NENR…LGDM. Acidic residues predominate over residues 342–356; that stretch reads NNEDETGGETEEDAD. 2 stretches are compositionally biased toward polar residues: residues 374-411 and 570-597; these read QPRT…KKAN and STLT…NEGL. Residue Ser-384 is modified to Phosphoserine. At Thr-394 the chain carries Phosphothreonine. A phosphoserine mark is found at Ser-396 and Ser-592. Positions 598–609 are enriched in low complexity; it reads SSTSRSDSASTA. The 280-residue stretch at 770 to 1049 folds into the PI3K/PI4K catalytic domain; sequence ATKKERIRKT…FLIGKSLGSI (280 aa). Residues 776–782 are G-loop; the sequence is IRKTSEY. Residues 915-923 form a catalytic loop region; it reads QVKDRHNGN. The segment at 934–958 is activation loop; the sequence is HIDFGFMLSNSPGSVGFEAAPFKLT.

The protein belongs to the PI3/PI4-kinase family. Type III PI4K subfamily. As to quaternary structure, interacts with FRQ1.

It is found in the nucleus. It localises to the golgi apparatus. The protein localises to the trans-Golgi network. It catalyses the reaction a 1,2-diacyl-sn-glycero-3-phospho-(1D-myo-inositol) + ATP = a 1,2-diacyl-sn-glycero-3-phospho-(1D-myo-inositol 4-phosphate) + ADP + H(+). Acts on phosphatidylinositol (PI) in the first committed step in the production of the second messenger inositol 1,4,5,-trisphosphate. PIK1 is part of a nuclear phosphoinositide cycle and could control cytokinesis through the actin cytoskeleton. Involved in the response to mating pheromone. In Saccharomyces cerevisiae (strain ATCC 204508 / S288c) (Baker's yeast), this protein is Phosphatidylinositol 4-kinase PIK1.